We begin with the raw amino-acid sequence, 292 residues long: Recombination-promoting nuclease RpnA (292 aa).

Belongs to the Rpn/YhgA-like nuclease family. The cofactor is Mg(2+).

Inhibited by EDTA, Zn(2+) and by Mg(2+) plus Mn(2+); stimulated by Ca(2+) in the presence of Mg(2+). A low activity DNA endonuclease yielding 3'-hydroxyl ends, equally active on ss or dsDNA, not active on dsRNA. Shows no sequence specificity. Upon expression enhances RecA-independent DNA recombination 49-fold, concomitantly reducing viability by 88% and probably inducing DNA damage as measured by induction of the SOS repair response in RecA cells. RecA-independent DNA recombination leads to replacement of recipient genes with large segments of donor DNA rather than DNA addition to the donor strain; increased expression of RpnA leads to smaller replacement segments, suggesting this protein may play a role in generating crossover events. The polypeptide is Recombination-promoting nuclease RpnA (Escherichia coli (strain K12)).